Reading from the N-terminus, the 517-residue chain is Nucleoside transporter FUN26 (517 aa).

The tract at residues 1–63 (MSTSADTDTI…EREQSVSTEP (63 aa)) is disordered. The segment covering 25–44 (THSEEISRSGEEHESENNEH) has biased composition (basic and acidic residues). S45 and S58 each carry phosphoserine. The next 11 helical transmembrane spans lie at 76–96 (LSYITFFAIGIGLLWPWNCIL), 116–136 (IFTSSMMSFSTISSMLFNIYL), 151–171 (LVWEIIVFTVMCFFTILHFLL), 174–194 (WFNFMFIMMLVVISSMGTAMT), 214–234 (MVGQAVAGVLPSLVLFALAFI), 243–263 (GGILLYFFTTTLVVTICVVMF), 344–364 (LVLSIFTTFVVTLVFPVFASA), 367–387 (VTGLPLSNAQYIPLIFTLWNL), 411–431 (TFIYSLLRVAAIPLFLMFTAI), 446–466 (IVDLCYMLLQFLFGVTNGHVI), and 492–512 (IFVSTGLALGSIISYVFVFII).

The protein belongs to the SLC29A/ENT transporter (TC 2.A.57) family.

Its subcellular location is the membrane. Functionally, has broad nucleoside selectivity (uridine, adenosine and cytidine) and most likely functions to transport nucleosides across intracellular membranes. This Saccharomyces cerevisiae (strain ATCC 204508 / S288c) (Baker's yeast) protein is Nucleoside transporter FUN26 (FUN26).